Consider the following 177-residue polypeptide: ATP synthase subunit delta (177 aa).

Belongs to the ATPase delta chain family. In terms of assembly, F-type ATPases have 2 components, F(1) - the catalytic core - and F(0) - the membrane proton channel. F(1) has five subunits: alpha(3), beta(3), gamma(1), delta(1), epsilon(1). F(0) has three main subunits: a(1), b(2) and c(10-14). The alpha and beta chains form an alternating ring which encloses part of the gamma chain. F(1) is attached to F(0) by a central stalk formed by the gamma and epsilon chains, while a peripheral stalk is formed by the delta and b chains.

It localises to the cell inner membrane. In terms of biological role, f(1)F(0) ATP synthase produces ATP from ADP in the presence of a proton or sodium gradient. F-type ATPases consist of two structural domains, F(1) containing the extramembraneous catalytic core and F(0) containing the membrane proton channel, linked together by a central stalk and a peripheral stalk. During catalysis, ATP synthesis in the catalytic domain of F(1) is coupled via a rotary mechanism of the central stalk subunits to proton translocation. Functionally, this protein is part of the stalk that links CF(0) to CF(1). It either transmits conformational changes from CF(0) to CF(1) or is implicated in proton conduction. In Flavobacterium psychrophilum (strain ATCC 49511 / DSM 21280 / CIP 103535 / JIP02/86), this protein is ATP synthase subunit delta.